The sequence spans 480 residues: MNANWNFDNSYARLPERFFTRIYPTPVSDPKLVVLNHSLAKELGLNAEVLASEEGVAVFAGNRVPEGAEPLAQAYAGHQFGYFNMLGDGRAILLGEHVTPSGERVDIQLKGSGRTPYSRGGDGRAALGPMLREYIISEAMHALGIPTTRSLAVVTTGEVVMRETELPGAILTRVAASHLRVGTFQYAGRFLSKEELQALADYAIKRHYPNGEHASNRYVFLLEEVMKKQAALVAKWQLVGFIHGVMNTDNMTISGETIDYGPCAFMDVYDPETVFSSIDTQGRYAYGNQPYIAGWNIARFAESLLPLLHDEEEKAIEIAQKVIEQFPALYETYWLQGMRAKLGLWTEEAEDKKLIGELLHLMYTHRLDYTNTFRSLTLEEWHFCEQELRDWYTRWQQRIARQDMTKEEVYECMRQNNPAIIPRNYRVEEALAAAVEHGDDTVMERLLHVLSDPYAYMEEQEEYAKTPEPSDRPYRTFCGT.

Residues glycine 87, glycine 89, arginine 90, lysine 110, aspartate 122, glycine 123, arginine 173, and arginine 180 each coordinate ATP. Aspartate 249 (proton acceptor) is an active-site residue. Mg(2+) is bound by residues asparagine 250 and aspartate 259. Aspartate 259 provides a ligand contact to ATP.

It belongs to the SELO family. It depends on Mg(2+) as a cofactor. Mn(2+) is required as a cofactor.

It catalyses the reaction L-seryl-[protein] + ATP = 3-O-(5'-adenylyl)-L-seryl-[protein] + diphosphate. The catalysed reaction is L-threonyl-[protein] + ATP = 3-O-(5'-adenylyl)-L-threonyl-[protein] + diphosphate. The enzyme catalyses L-tyrosyl-[protein] + ATP = O-(5'-adenylyl)-L-tyrosyl-[protein] + diphosphate. It carries out the reaction L-histidyl-[protein] + UTP = N(tele)-(5'-uridylyl)-L-histidyl-[protein] + diphosphate. It catalyses the reaction L-seryl-[protein] + UTP = O-(5'-uridylyl)-L-seryl-[protein] + diphosphate. The catalysed reaction is L-tyrosyl-[protein] + UTP = O-(5'-uridylyl)-L-tyrosyl-[protein] + diphosphate. In terms of biological role, nucleotidyltransferase involved in the post-translational modification of proteins. It can catalyze the addition of adenosine monophosphate (AMP) or uridine monophosphate (UMP) to a protein, resulting in modifications known as AMPylation and UMPylation. In Anoxybacillus flavithermus (strain DSM 21510 / WK1), this protein is Protein nucleotidyltransferase YdiU.